A 78-amino-acid polypeptide reads, in one-letter code: Small ribosomal subunit protein uS15c (78 aa).

The protein belongs to the universal ribosomal protein uS15 family. In terms of assembly, part of the 30S ribosomal subunit.

It localises to the plastid. Its subcellular location is the chloroplast. The protein is Small ribosomal subunit protein uS15c (rps15-A) of Saccharum officinarum (Sugarcane).